The chain runs to 155 residues: uncharacterized protein (155 aa).

This is an uncharacterized protein from Autographa californica nuclear polyhedrosis virus (AcMNPV).